Here is a 110-residue protein sequence, read N- to C-terminus: Period circadian protein (110 aa).

Positions 23–97 (VTNTSIAGTG…GGAGGGGGVT (75 aa)) are disordered. Tandem repeats lie at residues 30–31 (GT), 33–34 (GT), 36–37 (GT), 38–39 (GT), 40–41 (GT), 42–43 (GT), 44–45 (GT), 46–47 (GT), 48–49 (GT), 50–51 (GT), 52–53 (GT), and 54–55 (GT). Positions 30–63 (GTGGTGGTGTGTGTGTGTGTGTGTGTDTGTGTGT) are enriched in gly residues. Residues 30 to 79 (GTGGTGGTGTGTGTGTGTGTGTGTGTDTGTGTGTRNGTNSGTNSGTRTGT) form a 24 X 2 AA approximate tandem repeats of G-T region. The 13; approximate repeat unit spans residues 56–57 (DT). Repeat copies occupy residues 58–59 (GT), 60–61 (GT), and 62–63 (GT). The 17; approximate repeat unit spans residues 64-65 (RN). Over residues 64-83 (RNGTNSGTNSGTRTGTASSY) the composition is skewed to low complexity. Copy 18 of the repeat occupies 66–67 (GT). Residues 68 to 69 (NS) form a 19; approximate repeat. Residues 70 to 71 (GT) form repeat 20. The stretch at 72-73 (NS) is one 21; approximate repeat. Residues 74-75 (GT) form repeat 22. The 23; approximate repeat unit spans residues 76–77 (RT). Repeat unit 24 spans residues 78 to 79 (GT). Residues 84-96 (RGGGGGAGGGGGV) are compositionally biased toward gly residues.

Forms a heterodimer with timeless (TIM); the complex then translocates into the nucleus. In terms of processing, phosphorylated with a circadian rhythmicity, probably by the double-time protein (dbt). Phosphorylation could be implicated in the stability of per monomer and in the formation of heterodimer per-tim.

It localises to the nucleus. Its subcellular location is the cytoplasm. The protein resides in the perinuclear region. In terms of biological role, essential for biological clock functions. Determines the period length of circadian and ultradian rhythms; an increase in PER dosage leads to shortened circadian rhythms and a decrease leads to lengthened circadian rhythms. Essential for the circadian rhythmicity of locomotor activity, eclosion behavior, and for the rhythmic component of the male courtship song that originates in the thoracic nervous system. The biological cycle depends on the rhythmic formation and nuclear localization of the TIM-PER complex. Light induces the degradation of TIM, which promotes elimination of PER. Nuclear activity of the heterodimer coordinatively regulates PER and TIM transcription through a negative feedback loop. Behaves as a negative element in circadian transcriptional loop. Does not appear to bind DNA, suggesting indirect transcriptional inhibition. The protein is Period circadian protein (per) of Drosophila erecta (Fruit fly).